The sequence spans 864 residues: Disintegrin and metalloproteinase domain-containing protein 15 (864 aa).

Positions 1-17 (MRLALLWALGLLGAGSP) are cleaved as a signal peptide. A disordered region spans residues 18-45 (RPSPPLPNIGGTEEEQQASPERTLSGSM). The propeptide occupies 18-207 (RPSPPLPNIG…EQHHAHRLKR (190 aa)). Positions 34-45 (QASPERTLSGSM) are enriched in polar residues. The Cysteine switch motif lies at 177–184 (HTCAPSWH). Residue Cys-179 participates in Zn(2+) binding. Residues 208–696 (DVVTETKIVE…TQLKATSSLT (489 aa)) are Extracellular-facing. The region spanning 214-415 (KIVELVIVAD…GMGSCLFERQ (202 aa)) is the Peptidase M12B domain. Asn-238 carries an N-linked (GlcNAc...) asparagine glycan. Intrachain disulfides connect Cys-324-Cys-410, Cys-366-Cys-394, Cys-368-Cys-377, and Cys-481-Cys-501. His-349 is a Zn(2+) binding site. Glu-350 is an active-site residue. 2 residues coordinate Zn(2+): His-353 and His-359. N-linked (GlcNAc...) asparagine glycosylation is found at Asn-390 and Asn-393. Residues 422 to 509 (SSLCGNMFVD…QCPSDIRLGD (88 aa)) enclose the Disintegrin domain. N-linked (GlcNAc...) asparagine glycosylation is found at Asn-607 and Asn-612. 3 disulfides stabilise this stretch: Cys-658–Cys-668, Cys-662–Cys-674, and Cys-676–Cys-685. An EGF-like domain is found at 658–686 (CRRKCHGHGVCDSSGHCRCEEGWAPPDCM). A helical transmembrane segment spans residues 697-717 (TGLLLSLLLLLVLVLLGASYW). Phosphotyrosine; by HCK and LCK is present on residues Tyr-716 and Tyr-736. Topologically, residues 718-864 (HRARLHQRLC…PPPAASSLYL (147 aa)) are cytoplasmic. The tract at residues 736–864 (YRAPQSCPPE…PPPAASSLYL (129 aa)) is disordered. Over residues 741 to 750 (SCPPERPGPP) the composition is skewed to pro residues. Residues 752 to 762 (RAQQMTGTKQA) show a composition bias toward polar residues. Composition is skewed to pro residues over residues 768–780 (PVPP…PNPV) and 814–825 (TKPPPPRKPLPA). 2 consecutive short sequence motifs (SH3-binding) follow at residues 816–822 (PPPPRKP) and 851–857 (RPAPPPP).

In terms of assembly, interacts specifically with Src family protein-tyrosine kinases (PTKs). Interacts with ITAGV-ITGB3 (vitronectin receptor). Interacts with SH3GL2 and SNX9; this interaction occurs preferentially with ADAM15 precursor, rather than the processed form, suggesting it occurs in a secretory pathway compartment prior to the medial Golgi. Interacts with ITAG9-ITGB1. Interacts with SH3PXD2A. Interacts with ITAGV-ITGB1. Interacts with GRB2, HCK, ITSN1, ITSN2, LYN, MAPK1, MAPK3, NCF1, NCK1, nephrocystin, PTK6, SNX33, LCK and SRC. The cofactor is Zn(2+). The precursor is cleaved by a furin endopeptidase. An additional membrane proximal site of cleavage affects a small percentage of the proteins and results in disulfide-linked fragments. The prodomain is apparently cleaved in several positions that are N-terminal of the furin cleavage site. Post-translationally, may be partially sialylated. In terms of processing, phosphorylation increases association with PTKs. In terms of tissue distribution, expressed moderately in pericytes of retina. Expressed in testis and in spermatozoa from the caput, corpus, and cauda epididymis, as well as in non-capacitated and acrosome-reacted sperm (at protein level). Highly expressed in heart, brain, lung, and kidney. Expressed at lower levels in spleen, liver, testis and muscle.

The protein localises to the endomembrane system. Its subcellular location is the cell junction. It localises to the adherens junction. The protein resides in the cell projection. It is found in the cilium. The protein localises to the flagellum. Its subcellular location is the cytoplasmic vesicle. It localises to the secretory vesicle. The protein resides in the acrosome. Active metalloproteinase with gelatinolytic and collagenolytic activity. Plays a role in the wound healing process. Mediates both heterotypic intraepithelial cell/T-cell interactions and homotypic T-cell aggregation. Inhibits beta-1 integrin-mediated cell adhesion and migration of airway smooth muscle cells. Suppresses cell motility on or towards fibronectin possibly by driving alpha-v/beta-1 integrin (ITAGV-ITGB1) cell surface expression via ERK1/2 inactivation. Cleaves E-cadherin in response to growth factor deprivation. Plays a role in glomerular cell migration. Plays a role in pathological neovascularization. May play a role in cartilage remodeling. May be proteolytically processed, during sperm epididymal maturation and the acrosome reaction. May play a role in sperm-egg binding through its disintegrin domain. Interactions with egg membrane could be mediated via binding between the disintegrin-like domain to one or more integrin receptors on the egg. In Mus musculus (Mouse), this protein is Disintegrin and metalloproteinase domain-containing protein 15 (Adam15).